The sequence spans 256 residues: 5'-nucleotidase SurE (256 aa).

4 residues coordinate a divalent metal cation: D8, D9, S39, and N91.

Belongs to the SurE nucleotidase family. The cofactor is a divalent metal cation.

The protein localises to the cytoplasm. It catalyses the reaction a ribonucleoside 5'-phosphate + H2O = a ribonucleoside + phosphate. Its function is as follows. Nucleotidase that shows phosphatase activity on nucleoside 5'-monophosphates. The polypeptide is 5'-nucleotidase SurE (Marinobacter nauticus (strain ATCC 700491 / DSM 11845 / VT8) (Marinobacter aquaeolei)).